The primary structure comprises 208 residues: Frataxin, mitochondrial (208 aa).

A mitochondrion-targeting transit peptide spans 1–40 (MWTFGRRAAAGLLPRTASRASAWVRNPRGRERIGTCGRRG).

It belongs to the frataxin family. In terms of assembly, component of the mitochondrial core iron-sulfur cluster (ISC) complex composed of NFS1, LYRM4, NDUFAB1, ISCU, FXN, and FDX2; this complex is a heterohexamer containing two copies of each monomer. Homodimer. Monomer (probable predominant form). Oligomer. Monomers and polymeric aggregates of &gt;1 MDa have been isolated from mitochondria. A small fraction of heterologous overexpressed recombinant frataxin forms high-molecular weight aggregates that incorporate iron. Interacts with LYRM4. Interacts (via ferrous form) with ISCU; the interaction is possible when both are bound to the dimeric form of the cysteine desulfurase complex (NFS1:LYRM4) and the interaction enhances FXN interaction to the dimeric form of the cysteine desulfurase complex (NFS1:LYRM4). Interacts with FECH; one iron-bound FXN monomer seems to interact with a FECH homodimer. Interacts with SDHA and SDHB. Interacts with ACO2; the interaction is dependent on citrate. Interacts with HSPA9. As to quaternary structure, interacts with ACO1. Interacts with ISCU (cytoplasmic form). Post-translationally, processed in two steps by mitochondrial processing peptidase (MPP). MPP first cleaves the precursor to intermediate form and subsequently converts the intermediate to yield frataxin mature form (frataxin(81-210)) which is the predominant form. The additional forms, frataxin(56-210) and frataxin(78-210), seem to be produced when the normal maturation process is impaired; their physiological relevance is unsure.

The protein localises to the mitochondrion. Its subcellular location is the cytoplasm. It is found in the cytosol. It catalyses the reaction 4 Fe(2+) + O2 + 4 H(+) = 4 Fe(3+) + 2 H2O. In terms of biological role, functions as an activator of persulfide transfer to the scaffoding protein ISCU as component of the core iron-sulfur cluster (ISC) assembly complex and participates to the [2Fe-2S] cluster assembly. Accelerates sulfur transfer from NFS1 persulfide intermediate to ISCU and to small thiols such as L-cysteine and glutathione leading to persulfuration of these thiols and ultimately sulfide release. Binds ferrous ion and is released from FXN upon the addition of both L-cysteine and reduced FDX2 during [2Fe-2S] cluster assembly. The core iron-sulfur cluster (ISC) assembly complex is involved in the de novo synthesis of a [2Fe-2S] cluster, the first step of the mitochondrial iron-sulfur protein biogenesis. This process is initiated by the cysteine desulfurase complex (NFS1:LYRM4:NDUFAB1) that produces persulfide which is delivered on the scaffold protein ISCU in a FXN-dependent manner. Then this complex is stabilized by FDX2 which provides reducing equivalents to accomplish the [2Fe-2S] cluster assembly. Finally, the [2Fe-2S] cluster is transferred from ISCU to chaperone proteins, including HSCB, HSPA9 and GLRX5. May play a role in the protection against iron-catalyzed oxidative stress through its ability to catalyze the oxidation of Fe(2+) to Fe(3+); the oligomeric form but not the monomeric form has in vitro ferroxidase activity. May be able to store large amounts of iron in the form of a ferrihydrite mineral by oligomerization; however, the physiological relevance is unsure as reports are conflicting and the function has only been shown using heterologous overexpression systems. May function as an iron chaperone protein that protects the aconitase [4Fe-4S]2+ cluster from disassembly and promotes enzyme reactivation. May play a role as a high affinity iron binding partner for FECH that is capable of both delivering iron to ferrochelatase and mediating the terminal step in mitochondrial heme biosynthesis. Modulates the RNA-binding activity of ACO1. May be involved in the cytoplasmic iron-sulfur protein biogenesis. May contribute to oxidative stress resistance and overall cell survival. The chain is Frataxin, mitochondrial from Rattus norvegicus (Rat).